The following is a 432-amino-acid chain: Endosome-associated-trafficking regulator 1 (432 aa).

Phosphoserine is present on Ser18. Positions 126 to 143 are enriched in basic and acidic residues; that stretch reads DTTTSRIYPKEASRHPLG. Residues 126 to 145 form a disordered region; it reads DTTTSRIYPKEASRHPLGLE. Ser148 carries the phosphoserine modification. The segment at 174–196 is required for interaction with PTPN13; that stretch reads LEEDEDDGWNITYLPSAVDQTHS. A disordered region spans residues 226-250; that stretch reads PPWTLSDTDSRISPASPAGSPNADF. Residues Ser241 and Ser245 each carry the phosphoserine modification. Coiled-coil stretches lie at residues 262 to 289 and 315 to 370; these read LRTLQISYEALKDENSKLRRKLNEVQSF and FHDL…LRSG.

Belongs to the ENTR1 family. As to quaternary structure, found in a complex with ENTR1, PTPN13 and GIT1. Interacts with PTPN13 (via the FERM domain). Interacts (via N-terminus) with GIT1 (via N- and C-terminus); this interaction is direct. Interacts with NOD2. Interacts (via N-terminus) with IFT88. Interacts with VPS35. In terms of processing, phosphorylated.

Its subcellular location is the cytoplasm. It is found in the early endosome. The protein localises to the endosome. It localises to the recycling endosome. The protein resides in the midbody. Its subcellular location is the cytoskeleton. It is found in the microtubule organizing center. The protein localises to the centrosome. It localises to the cilium basal body. In terms of biological role, may be involved in modulation of TNF response. May be involved in presentation of TNFRSF1A on the cell surface. Involved in the endosome-to-plasma membrane trafficking and recycling of SNX27-retromer-dependent cargo proteins, such as GLUT1. Involved in the regulation of cytokinesis; the function may involve PTPN13 and GIT1. Functionally, endosome-associated protein that plays a role in membrane receptor sorting, cytokinesis and ciliogenesis. Involved in the endosome-to-plasma membrane trafficking and recycling of SNX27-retromer-dependent cargo proteins, such as GLUT1. Involved in the regulation of cytokinesis; the function may involve PTPN13 and GIT1. Plays a role in the formation of cilia. Involved in cargo protein localization, such as PKD2, at primary cilia. Involved in the presentation of the tumor necrosis factor (TNF) receptor TNFRSF1A on the cell surface, and hence in the modulation of the TNF-induced apoptosis. The protein is Endosome-associated-trafficking regulator 1 of Mus musculus (Mouse).